Consider the following 165-residue polypeptide: Large ribosomal subunit protein uL15 (165 aa).

The tract at residues 1–44 (MSLNQLKAPRGANRAKKRVGRGQGSGLGKTAGRGGKGQKARSGN) is disordered. The span at 21-37 (RGQGSGLGKTAGRGGKG) shows a compositional bias: gly residues.

Belongs to the universal ribosomal protein uL15 family. Part of the 50S ribosomal subunit.

Binds to the 23S rRNA. This chain is Large ribosomal subunit protein uL15, found in Anaeromyxobacter dehalogenans (strain 2CP-C).